Here is a 209-residue protein sequence, read N- to C-terminus: Ras-like GTP-binding protein RYL2 (209 aa).

Position 12–19 (12–19 (GAQGVGKT)) interacts with GTP. The short motif at 34 to 42 (QASTIGASF) is the Effector region element. Residues 60–64 (DTAGQ) and 118–121 (TKVD) contribute to the GTP site. 2 S-geranylgeranyl cysteine lipidation sites follow: Cys-208 and Cys-209.

The protein belongs to the small GTPase superfamily. Rab family.

The protein resides in the cell membrane. Its function is as follows. Protein transport. Probably involved in vesicular traffic. This is Ras-like GTP-binding protein RYL2 (RYL2) from Yarrowia lipolytica (strain CLIB 122 / E 150) (Yeast).